The chain runs to 243 residues: uncharacterized protein (243 aa).

This is an uncharacterized protein from Orgyia pseudotsugata multicapsid polyhedrosis virus (OpMNPV).